Consider the following 306-residue polypeptide: Palmitoyl-protein thioesterase 1 (306 aa).

Residues 1 to 27 (MASSSCLWLLALAFLLGSCASLALGHL) form the signal peptide. Disulfide bonds link Cys45–Cys46, Cys96–Cys128, and Cys152–Cys160. Residue Ser115 is part of the active site. N-linked (GlcNAc...) asparagine glycans are attached at residues Asn197, Asn212, and Asn232. Active-site residues include Asp233 and His289.

This sequence belongs to the palmitoyl-protein thioesterase family. In terms of assembly, interacts with CLN5, ATP5F1A and ATP5F1B. Post-translationally, glycosylated. As to expression, spleen, brain, seminal vesicle, and testis. Lower levels of activity in liver, heart, lung, and skeletal muscle.

It localises to the lysosome. The protein resides in the secreted. Its subcellular location is the golgi apparatus. It is found in the endoplasmic reticulum. The enzyme catalyses S-hexadecanoyl-L-cysteinyl-[protein] + H2O = L-cysteinyl-[protein] + hexadecanoate + H(+). It catalyses the reaction hexadecanoyl-CoA + H2O = hexadecanoate + CoA + H(+). The catalysed reaction is S-hexadecanoyl-N-acetylcysteamine + H2O = N-acetylcysteamine + hexadecanoate + H(+). It carries out the reaction S-hexadecanoyl-N-acetylcysteine methyl ester + H2O = N-acetylcysteine methyl ester + hexadecanoate + H(+). With respect to regulation, palmitoylation reduces PPT1 enzymatic activity. Its function is as follows. Has thioesterase activity against fatty acid thioesters with 14 -18 carbons, including palmitoyl-CoA, S-palmitoyl-N-acetylcysteamine, and palmitoylated proteins. In contrast to PPT2, PPT1 can hydrolyze palmitoylated proteins and palmitoylcysteine. The protein is Palmitoyl-protein thioesterase 1 (PPT1) of Bos taurus (Bovine).